A 389-amino-acid polypeptide reads, in one-letter code: NADH-dependent butanol dehydrogenase A (389 aa).

Belongs to the iron-containing alcohol dehydrogenase family. Homodimer.

Its pathway is alcohol metabolism; butanol biosynthesis. The polypeptide is NADH-dependent butanol dehydrogenase A (bdhA) (Clostridium acetobutylicum (strain ATCC 824 / DSM 792 / JCM 1419 / IAM 19013 / LMG 5710 / NBRC 13948 / NRRL B-527 / VKM B-1787 / 2291 / W)).